Reading from the N-terminus, the 735-residue chain is MAKERGLISPSDFAQLQKYMEYSTKKVSDVLKLFEDGEMAKYVQGDAIGYEGFQQFLKIYLEVDNVPRHLSLALFQSFETGHCLNETNVTKDVVCLNDVSCYFSLLEGGRPEDKLEFTFKLYDTDRNGILDSSEVDKIILQMMRVAEYLDWDVSELRPILQEMMKEIDYDGSGSVSQAEWVRAGATTVPLLVLLGLEMTLKDDGQHMWRPKRFPRPVYCNLCESSIGLGKQGLSCNLCKYTVHDQCAMKALPCEVSTYAKSRKDIGVQSHVWVRGGCESGRCDRCQKKIRIYHSLTGLHCVWCHLEIHDDCLQAVGHECDCGLLRDHILPPSSIYPSVLASGPDRKNSKTSQKTMDDLNLSTSEALRIDPVPNTHPLLVFVNPKSGGKQGQRVLWKFQYILNPRQVFNLLKDGPEIGLRLFKDVPDSRILVCGGDGTVGWILETIDKANLPVLPPVAVLPLGTGNDLARCLRWGGGYEGQNLAKILKDLEMSKVVHMDRWSVEVIPQQTEEKSDPVPFQIINNYFSIGVDASIAHRFHIMREKYPEKFNSRMKNKLWYFEFATSESIFSTCKKLEESLTVEICGKPLDLSNLSLEGIAVLNIPSMHGGSNLWGDTRRPHGDIYGINQALGATAKVITDPDILKTCVPDLSDKRLEVVGLEGAIEMGQIYTKLKNAGRRLAKCSEITFHTTKTLPMQIDGEPWMQTPCTIKITHKNQMPMLMGPPPRSTNFFGFLS.

EF-hand domains lie at 110–145 (RPED…MMRV) and 155–190 (ELRP…TVPL). Positions 123, 125, 127, 134, 168, 170, 172, 174, and 179 each coordinate Ca(2+). 2 Phorbol-ester/DAG-type zinc fingers span residues 205–253 (QHMW…ALPC) and 269–319 (SHVW…GHEC). One can recognise a DAGKc domain in the interval 372–506 (PNTHPLLVFV…MDRWSVEVIP (135 aa)). Lys-484 carries the post-translational modification N6-acetyllysine.

It belongs to the eukaryotic diacylglycerol kinase family. As to quaternary structure, monomer. As to expression, expressed in lymphocytes.

Its subcellular location is the cytoplasm. The protein localises to the cytosol. It catalyses the reaction a 1,2-diacyl-sn-glycerol + ATP = a 1,2-diacyl-sn-glycero-3-phosphate + ADP + H(+). The catalysed reaction is a 1-O-alkyl-sn-glycerol + ATP = a 1-O-alkyl-sn-glycero-3-phosphate + ADP + H(+). It carries out the reaction 1-O-alkyl-2-acyl-sn-glycerol + ATP = 1-O-alkyl-2-acyl-sn-glycero-3-phosphate + ADP + H(+). The enzyme catalyses 1,2-dihexadecanoyl-sn-glycerol + ATP = 1,2-dihexadecanoyl-sn-glycero-3-phosphate + ADP + H(+). It catalyses the reaction 1-hexadecanoyl-2-(9Z-octadecenoyl)-sn-glycerol + ATP = 1-hexadecanoyl-2-(9Z-octadecenoyl)-sn-glycero-3-phosphate + ADP + H(+). The catalysed reaction is 2-(9Z-octadecenoyl)-glycerol + ATP = 2-(9Z-octadecenoyl)-sn-glycero-3-phosphate + ADP + H(+). It carries out the reaction 1,2-di-(9Z-octadecenoyl)-sn-glycerol + ATP = 1,2-di-(9Z-octadecenoyl)-sn-glycero-3-phosphate + ADP + H(+). The enzyme catalyses 1-octadecanoyl-2-(5Z,8Z,11Z,14Z-eicosatetraenoyl)-sn-glycerol + ATP = 1-octadecanoyl-2-(5Z,8Z,11Z,14Z-eicosatetraenoyl)-sn-glycero-3-phosphate + ADP + H(+). It catalyses the reaction 1,2-didecanoyl-sn-glycerol + ATP = 1,2-didecanoyl-sn-glycero-3-phosphate + ADP + H(+). The catalysed reaction is 1-O-hexadecyl-2-acetyl-sn-glycerol + ATP = 1-O-hexadecyl-2-acetyl-sn-glycero-3-phosphate + ADP + H(+). It carries out the reaction 1-O-hexadecyl-2-(5Z,8Z,11Z,14Z-eicosatetraenoyl)-sn-glycerol + ATP = 1-O-hexadecyl-2-(5Z,8Z,11Z,14Z-eicosatetraenoyl)-sn-glycero-3-phosphate + ADP + H(+). The enzyme catalyses 1-O-hexadecyl-2-(9Z-octadecenoyl)-sn-glycerol + ATP = 1-O-hexadecyl-2-(9Z-octadecenoyl)-sn-glycero-3-phosphate + ADP + H(+). It catalyses the reaction 1-O-hexadecyl-sn-glycerol + ATP = 1-O-hexadecyl-sn-glycero-3-phosphate + ADP + H(+). The protein operates within lipid metabolism; glycerolipid metabolism. With respect to regulation, stimulated by calcium and phosphatidylserine. In terms of biological role, diacylglycerol kinase that converts diacylglycerol/DAG into phosphatidic acid/phosphatidate/PA and regulates the respective levels of these two bioactive lipids. Thereby, acts as a central switch between the signaling pathways activated by these second messengers with different cellular targets and opposite effects in numerous biological processes. Also plays an important role in the biosynthesis of complex lipids. Can also phosphorylate 1-alkyl-2-acylglycerol in vitro as efficiently as diacylglycerol provided it contains an arachidonoyl group. Also involved in the production of alkyl-lysophosphatidic acid, another bioactive lipid, through the phosphorylation of 1-alkyl-2-acetyl glycerol. This Homo sapiens (Human) protein is Diacylglycerol kinase alpha (DGKA).